A 177-amino-acid polypeptide reads, in one-letter code: Probasin (177 aa).

The first 17 residues, 1–17 (MRVILLLLTLDVLGVSS), serve as a signal peptide directing secretion. A disulfide bridge connects residues Cys-79 and Cys-170.

The protein belongs to the calycin superfamily. Lipocalin family. Prostatic epithelial cells.

The protein resides in the nucleus. Its subcellular location is the secreted. The sequence is that of Probasin (Pbsn) from Rattus norvegicus (Rat).